A 173-amino-acid chain; its full sequence is Large ribosomal subunit protein uL18 (173 aa).

The protein belongs to the universal ribosomal protein uL18 family. Part of the 50S ribosomal subunit. Contacts the 5S and 23S rRNAs.

Its function is as follows. This is one of the proteins that bind and probably mediate the attachment of the 5S RNA into the large ribosomal subunit, where it forms part of the central protuberance. The chain is Large ribosomal subunit protein uL18 from Methanococcoides burtonii (strain DSM 6242 / NBRC 107633 / OCM 468 / ACE-M).